The sequence spans 709 residues: Nucleobase-ascorbate transporter 12 (709 aa).

The interval 1 to 145 is disordered; sequence MSSSDPKPGP…GSGDPVRRPG (145 aa). A compositionally biased stretch (pro residues) spans 7-19; it reads KPGPKPGPWPPTP. S40 carries the post-translational modification Phosphoserine. A compositionally biased stretch (polar residues) spans 41–53; sequence GETTATDSSSGQL. 2 stretches are compositionally biased toward basic and acidic residues: residues 89 to 98 and 113 to 122; these read ETDKDKKEKP and QPVKRRRDSD. Helical transmembrane passes span 190–210, 218–238, 240–260, 283–303, 308–328, 329–349, 361–381, 438–458, 530–550, 551–571, 585–605, and 639–659; these read YLSM…AMGG, VVST…SFGS, LPLI…IINS, IIIG…SLIL, PVVV…YGFP, LVGK…IFAL, IFLI…AFLL, WGVP…SVIA, GACV…LASI, PQVM…ALGL, IIIV…FQQY, and YVMN…AVIL.

This sequence belongs to the nucleobase:cation symporter-2 (NCS2) (TC 2.A.40) family. In terms of tissue distribution, ubiquitous.

Its subcellular location is the cell membrane. This chain is Nucleobase-ascorbate transporter 12 (NAT12), found in Arabidopsis thaliana (Mouse-ear cress).